The following is a 918-amino-acid chain: Rap guanine nucleotide exchange factor 3 (918 aa).

A Phosphoserine modification is found at S79. The 77-residue stretch at 110 to 186 folds into the DEP domain; the sequence is ATYPTLIRDR…RDAQFYRFPG (77 aa). Residues 218 to 242 form an interaction with PDE3B region; that stretch reads TVALRKPPGQRTDEELDLIFEELLH. 3',5'-cyclic AMP contacts are provided by residues 311 to 314 and 321 to 322; these read GQLA and RA. Residues 369–388 are disordered; it reads TSQGAGPSRPPTPGRNRYTV. Residues 384 to 521 form the N-terminal Ras-GEF domain; sequence NRYTVMSGTP…EQYPERRRHH (138 aa). The segment at 398–422 is interaction with PDE3B; the sequence is ELLLEAMRPDSSAHDPTETFLSDFL. Phosphoserine occurs at positions 531 and 859. A Ras-GEF domain is found at 665–884; it reads SAKDLAGQLT…SRISTCSEQS (220 aa).

As to quaternary structure, interacts with PDE3B and PIK3R6; form a signaling complex that regulates phosphatidylinositol 3-kinase gamma in angiogenesis.

The protein localises to the cytoplasm. It is found in the membrane. In terms of biological role, guanine nucleotide exchange factor (GEF) for RAP1A and RAP2A small GTPases that is activated by binding cAMP. Through simultaneous binding of PDE3B to RAPGEF3 and PIK3R6 is assembled in a signaling complex in which it activates the PI3K gamma complex and which is involved in angiogenesis. Plays a role in the modulation of the cAMP-induced dynamic control of endothelial barrier function through a pathway that is independent on Rho-mediated signaling. Required for the actin rearrangement at cell-cell junctions, such as stress fibers and junctional actin. In Mus musculus (Mouse), this protein is Rap guanine nucleotide exchange factor 3 (Rapgef3).